A 272-amino-acid polypeptide reads, in one-letter code: Shikimate dehydrogenase (NADP(+)) (272 aa).

Shikimate is bound by residues 16–18 and T63; that span reads SLS. K67 serves as the catalytic Proton acceptor. NADP(+) is bound at residue E79. Residues N88 and D103 each contribute to the shikimate site. NADP(+)-binding positions include 127-131, 151-156, and I212; these read GAGGA and NRTMSR. A shikimate-binding site is contributed by Y214. NADP(+) is bound at residue G235.

Belongs to the shikimate dehydrogenase family. As to quaternary structure, homodimer.

The catalysed reaction is shikimate + NADP(+) = 3-dehydroshikimate + NADPH + H(+). The protein operates within metabolic intermediate biosynthesis; chorismate biosynthesis; chorismate from D-erythrose 4-phosphate and phosphoenolpyruvate: step 4/7. Functionally, involved in the biosynthesis of the chorismate, which leads to the biosynthesis of aromatic amino acids. Catalyzes the reversible NADPH linked reduction of 3-dehydroshikimate (DHSA) to yield shikimate (SA). The protein is Shikimate dehydrogenase (NADP(+)) of Staphylococcus epidermidis (strain ATCC 12228 / FDA PCI 1200).